Consider the following 155-residue polypeptide: MDLRLLGIDNTPLFHTLHHMMEAAGEDSVNAPSKIYVRDAKAMAATPADVKEYPNSYVFVVDMPGLKSGDIKVQVEEDNVLLISGERKREEEKEGAKFIRMERRVGKFMRKFSLPENANTDAISAVCQDGVLTVTVQKLPPPEPKKPKTIEVKVA.

Positions 39 to 155 (DAKAMAATPA…KPKTIEVKVA (117 aa)) constitute a sHSP domain.

It belongs to the small heat shock protein (HSP20) family.

Its subcellular location is the cytoplasm. This is 17.3 kDa class II heat shock protein from Solanum peruvianum (Peruvian tomato).